The primary structure comprises 185 residues: Large ribosomal subunit protein uL5 (185 aa).

Belongs to the universal ribosomal protein uL5 family. Part of the 50S ribosomal subunit; part of the 5S rRNA/L5/L18/L25 subcomplex. Contacts the 5S rRNA and the P site tRNA. Forms a bridge to the 30S subunit in the 70S ribosome.

Functionally, this is one of the proteins that bind and probably mediate the attachment of the 5S RNA into the large ribosomal subunit, where it forms part of the central protuberance. In the 70S ribosome it contacts protein S13 of the 30S subunit (bridge B1b), connecting the 2 subunits; this bridge is implicated in subunit movement. Contacts the P site tRNA; the 5S rRNA and some of its associated proteins might help stabilize positioning of ribosome-bound tRNAs. The protein is Large ribosomal subunit protein uL5 of Rhodopseudomonas palustris (strain BisA53).